The primary structure comprises 511 residues: Putative thymidine phosphorylase (511 aa).

Belongs to the thymidine/pyrimidine-nucleoside phosphorylase family. Type 2 subfamily.

The catalysed reaction is thymidine + phosphate = 2-deoxy-alpha-D-ribose 1-phosphate + thymine. The polypeptide is Putative thymidine phosphorylase (Bradyrhizobium sp. (strain BTAi1 / ATCC BAA-1182)).